A 463-amino-acid chain; its full sequence is L-seryl-tRNA(Sec) selenium transferase (463 aa).

The residue at position 295 (lysine 295) is an N6-(pyridoxal phosphate)lysine.

It belongs to the SelA family. Homodecamer; pentamer of dimers. Binds only one seryl-tRNA(Sec) per dimer. Requires pyridoxal 5'-phosphate as cofactor.

The protein resides in the cytoplasm. It carries out the reaction L-seryl-tRNA(Sec) + selenophosphate + H(+) = L-selenocysteinyl-tRNA(Sec) + phosphate. It participates in aminoacyl-tRNA biosynthesis; selenocysteinyl-tRNA(Sec) biosynthesis; selenocysteinyl-tRNA(Sec) from L-seryl-tRNA(Sec) (bacterial route): step 1/1. In terms of biological role, converts seryl-tRNA(Sec) to selenocysteinyl-tRNA(Sec) required for selenoprotein biosynthesis. The protein is L-seryl-tRNA(Sec) selenium transferase of Escherichia coli O17:K52:H18 (strain UMN026 / ExPEC).